The following is a 377-amino-acid chain: Opsin-5 (377 aa).

Topologically, residues 1–33 (MALNHTALPQDERLPHYLRDEDPFASKLSWEAD) are extracellular. N-linked (GlcNAc...) asparagine glycosylation occurs at Asn4. A helical transmembrane segment spans residues 34–54 (LVAGFYLTIIGILSTFGNGYV). Residues 55 to 74 (LYMSSRRKKKLRPAEIMTIN) lie on the Cytoplasmic side of the membrane. Residues 75 to 95 (LAVCDLGISVVGKPFTIISCF) traverse the membrane as a helical segment. Residues 96 to 108 (CHRWVFGWFGCRW) lie on the Extracellular side of the membrane. A disulfide bridge links Cys106 with Cys183. The chain crosses the membrane as a helical span at residues 109–129 (YGWAGFFFGCGSLITMTAVSL). At 130 to 150 (DRYLKICYLSYGVWLKRKHAY) the chain is on the cytoplasmic side. Residues 151-171 (ICLAVIWAYASFWTTMPLVGL) form a helical membrane-spanning segment. Residues 172–197 (GDYAPEPFGTSCTLDWWLAQASGGGQ) are Extracellular-facing. A helical transmembrane segment spans residues 198-218 (VFILSILFFCLLLPTAVIVFS). Residues 219–252 (YAKIIAKVKSSSKEVAHFDSRIHSSHVLEVKLTK) are Cytoplasmic-facing. The chain crosses the membrane as a helical span at residues 253–273 (VAMLICAGFLIAWIPYAVVSV). Over 274 to 288 (WSAFGRPDSIPIQLS) the chain is Extracellular. The chain crosses the membrane as a helical span at residues 289 to 309 (VVPTLLAKSAAMYNPIIYQVI). Lys296 carries the post-translational modification N6-(retinylidene)lysine. Residues 310-377 (DYRFACCQAG…HSNDGDCGKK (68 aa)) lie on the Cytoplasmic side of the membrane. 2 S-palmitoyl cysteine lipidation sites follow: Cys315 and Cys316. A disordered region spans residues 357 to 377 (FTSAHVMDGESHSNDGDCGKK). The span at 363–377 (MDGESHSNDGDCGKK) shows a compositional bias: basic and acidic residues.

Belongs to the G-protein coupled receptor 1 family. Opsin subfamily. It is uncertain whether Cys-315 or Cys-316 is palmitoylated. Expressed in the brain (at protein level). Weakly expressed in the skin and liver (at protein level). Abundantly expressed in striated muscle cells. Expressed in Math7/Atok7-dependent retinal ganglion cells in the ganglion cell layer (at protein level). Additionally expressed in horizontal and amacrine cells in the inner nuclear layer of the retina (at protein level). Expressed around the base of hair follicles and in epidermal and sebaceous gland cells of the outer ear (at protein level). Abundantly expressed in vibrissae hair follicles and weakly expressed in the vibrissae skin pad, dorsal back skin, and tail.

Its subcellular location is the cell membrane. Its function is as follows. G-protein coupled receptor which selectively activates G(i) type G proteins via ultraviolet A (UVA) light-mediated activation in the retina. Preferentially binds the chromophore 11-cis retinal and is a bistable protein that displays emission peaks at 380 nm (UVA light) and 470 nm (blue light). Required for the light-response in the inner plexiform layer, and contributes to the regulation of the light-response in the nerve fiber layer, via phosphorylated DAT/SLC6A3 dopamine uptake. Involved in local corneal and retinal circadian rhythm photoentrainment via modulation of the UVA light-induced phase-shift of the retina clock. Acts as a circadian photoreceptor in the outer ear and vibrissal pads, via modulation of circadian clock-gene expression in response to violet light during the light-to-dark transition phase and night phase of the circadian cycle. Required in the retina to negatively regulate hyaloid vessel regression during postnatal development via light-dependent OPN5-SLC32A1-DRD2-VEGFR2 signaling. Involved in the light-dependent regulation of retina and vitreous compartment dopamine levels. This chain is Opsin-5 (Opn5), found in Mus musculus (Mouse).